The following is a 155-amino-acid chain: UPF0303 protein lp_3613 (155 aa).

This sequence belongs to the UPF0303 family.

The sequence is that of UPF0303 protein lp_3613 from Lactiplantibacillus plantarum (strain ATCC BAA-793 / NCIMB 8826 / WCFS1) (Lactobacillus plantarum).